We begin with the raw amino-acid sequence, 384 residues long: Urea transporter 1 (384 aa).

Residues 1–23 (MDDNPTAVKLDQGGNQAPQGQGR) form a disordered region. 5 helical membrane-spanning segments follow: residues 61-81 (ISQVVFVSNPISGILILVGLL), 85-105 (PWCALNGCVGTVVSTLTALLL), 111-131 (AITAGLQGYNATLVGILMAIY), 138-158 (FWWLLFPVSAMSMTCPIFSSA), and 168-188 (LPVFTLPFNMALSMYLSATGH). The N-linked (GlcNAc...) asparagine glycan is linked to Asn206. The next 3 membrane-spanning stretches (helical) occupy residues 237–257 (GGIFLGAILLSSPLMCLHAAI), 279–299 (GLWGFNSSLACIAIGGMFMAL), and 327–347 (VVGLPSCTWPFCLATLLFLLL).

Belongs to the urea transporter family. Homotrimer; each subunit contains a pore through which urea permeates. Identified in a complex with STOM.

It localises to the cell membrane. Its subcellular location is the basolateral cell membrane. The catalysed reaction is urea(in) = urea(out). Functionally, mediates the transport of urea driven by a concentration gradient across the cell membranes of erythrocytes and the renal inner medullary collecting duct which is critical to the urinary concentrating mechanism. Facilitates water transport in erythrocytes. This Capra hircus (Goat) protein is Urea transporter 1 (SLC14A1).